A 169-amino-acid polypeptide reads, in one-letter code: NADH-quinone oxidoreductase subunit I (169 aa).

2 consecutive 4Fe-4S ferredoxin-type domains span residues 61–90 and 100–129; these read RKYK…IEAQ and VRYD…EGPN. [4Fe-4S] cluster contacts are provided by Cys-70, Cys-73, Cys-76, Cys-80, Cys-109, Cys-112, Cys-115, and Cys-119.

This sequence belongs to the complex I 23 kDa subunit family. As to quaternary structure, NDH-1 is composed of 14 different subunits. Subunits NuoA, H, J, K, L, M, N constitute the membrane sector of the complex. The cofactor is [4Fe-4S] cluster.

It localises to the cell inner membrane. The catalysed reaction is a quinone + NADH + 5 H(+)(in) = a quinol + NAD(+) + 4 H(+)(out). Its function is as follows. NDH-1 shuttles electrons from NADH, via FMN and iron-sulfur (Fe-S) centers, to quinones in the respiratory chain. The immediate electron acceptor for the enzyme in this species is believed to be ubiquinone. Couples the redox reaction to proton translocation (for every two electrons transferred, four hydrogen ions are translocated across the cytoplasmic membrane), and thus conserves the redox energy in a proton gradient. This is NADH-quinone oxidoreductase subunit I from Ehrlichia chaffeensis (strain ATCC CRL-10679 / Arkansas).